The primary structure comprises 499 residues: Lysine--tRNA ligase (499 aa).

Mg(2+) is bound by residues E408 and E415.

This sequence belongs to the class-II aminoacyl-tRNA synthetase family. Homodimer. Mg(2+) is required as a cofactor.

Its subcellular location is the cytoplasm. It catalyses the reaction tRNA(Lys) + L-lysine + ATP = L-lysyl-tRNA(Lys) + AMP + diphosphate. The polypeptide is Lysine--tRNA ligase (Bacillus mycoides (strain KBAB4) (Bacillus weihenstephanensis)).